Here is a 159-residue protein sequence, read N- to C-terminus: MSHHDERTFVMVKPDGVQRGLIGEIVSRFEERGLKLVGGKFMQIDEDLAHQHYGEHEGKPFFDGLVDFITSAPVFAMVWEGADATRQVRSMVGETDPAESAPGTIRGDFGLDLGQNVIHASDHEDEGANEREIDLFFDEEELVDYGLDTAAWVYEDEQH.

The ATP site is built by K13, F61, R89, T95, R106, and N116. The active-site Pros-phosphohistidine intermediate is the H119.

This sequence belongs to the NDK family. Mg(2+) serves as cofactor.

It localises to the cytoplasm. The enzyme catalyses a 2'-deoxyribonucleoside 5'-diphosphate + ATP = a 2'-deoxyribonucleoside 5'-triphosphate + ADP. It carries out the reaction a ribonucleoside 5'-diphosphate + ATP = a ribonucleoside 5'-triphosphate + ADP. Functionally, major role in the synthesis of nucleoside triphosphates other than ATP. The ATP gamma phosphate is transferred to the NDP beta phosphate via a ping-pong mechanism, using a phosphorylated active-site intermediate. The protein is Nucleoside diphosphate kinase of Halorubrum lacusprofundi (strain ATCC 49239 / DSM 5036 / JCM 8891 / ACAM 34).